The following is a 202-amino-acid chain: Nascent polypeptide-associated complex subunit alpha (202 aa).

Basic and acidic residues predominate over residues Met-1–Val-19. Residues Met-1–Val-41 form a disordered region. The NAC-A/B domain occupies Ser-45–Ala-110. Low complexity predominate over residues Gln-117–Glu-127. A disordered region spans residues Gln-117–Ala-165. The span at His-128 to Glu-149 shows a compositional bias: basic and acidic residues. Over residues Glu-150–Gly-162 the composition is skewed to acidic residues. A UBA domain is found at Leu-163–Ile-202.

It belongs to the NAC-alpha family. In terms of assembly, part of the nascent polypeptide-associated complex (NAC), consisting of egd2 and egd1. NAC associates with ribosomes via egd1.

The protein resides in the cytoplasm. Its subcellular location is the nucleus. Functionally, component of the nascent polypeptide-associated complex (NAC), a dynamic component of the ribosomal exit tunnel, protecting the emerging polypeptides from interaction with other cytoplasmic proteins to ensure appropriate nascent protein targeting. The NAC complex also promotes mitochondrial protein import by enhancing productive ribosome interactions with the outer mitochondrial membrane and blocks the inappropriate interaction of ribosomes translating non-secretory nascent polypeptides with translocation sites in the membrane of the endoplasmic reticulum. Egd2 may also be involved in transcription regulation. The sequence is that of Nascent polypeptide-associated complex subunit alpha (egd2) from Aspergillus oryzae (strain ATCC 42149 / RIB 40) (Yellow koji mold).